Here is an 802-residue protein sequence, read N- to C-terminus: E3 ubiquitin-protein ligase UHRF2 (802 aa).

In terms of domain architecture, Ubiquitin-like spans 1-78 (MWIQVRTIDG…IQLLVRPDPD (78 aa)). 2 disordered regions span residues 80–116 (LPGT…TSAR) and 153–197 (RASD…STSN). Composition is skewed to polar residues over residues 82–96 (GTST…SNSP), 153–177 (RASD…TNGN), and 188–197 (KLDSVPSTSN). Positions 117-311 (ARLIDPGFGI…VDEIFKIERP (195 aa)) are required for interaction with histone H3. Residues 194–288 (STSNSDCVAA…KELRVKIFLG (95 aa)) are interaction with PCNP. A PHD-type zinc finger spans residues 344–395 (SCSCRVCGGKHEPNMQLLCDECNVAYHIYCLNPPLDKVPEEEYWYCPSCKTD). Residues 414–644 (KMPSASTESR…LQYPAGYPSD (231 aa)) form a methyl-CpG binding and interaction with HDAC1 region. In terms of domain architecture, YDG spans 448 to 612 (GPIPGIPVGS…FLVWRYLLRR (165 aa)). The tract at residues 640–674 (GYPSDKEGKKPKGQSKKQPSGTTKRPISDDDCPSA) is disordered. Phosphoserine is present on S667. The segment at 733–772 (CVCCQELVYQPVTTECFHNVCKDCLQRSFKAQVFSCPACR) adopts an RING-type zinc-finger fold.

As to quaternary structure, homodimer; disulfide-linked. Binds methylated CpG containing oligonucleotides. Interacts with H3; the interaction has a preference for the 'Lys-9' trimethylated form of H3 (H3K9me3). Interacts with PCNP. Interacts with HDAC1. Interacts directly with CCNE1; the interaction ubiquitinates CCNE1 and appears independent of CCNE1 phosphorylation. Interacts with CCND1; the interaction ubiquitinates CCND1 and appears independent of CCND1 phosphorylation. Interacts with p53/TP53 and RB1. Interacts with UBE2I. Interacts with ZNF618. Interacts with UHRF1. Interacts with FANCD2. Interacts with ATR. Interacts with PCNA. Post-translationally, may be autoubiquitinated; which may lead to proteasomal degradation. In terms of processing, phosphorylated. Phosphorylation may be mediated by CDK2. Autosumoylated.

The protein resides in the nucleus. Its subcellular location is the chromosome. It catalyses the reaction S-ubiquitinyl-[E2 ubiquitin-conjugating enzyme]-L-cysteine + [acceptor protein]-L-lysine = [E2 ubiquitin-conjugating enzyme]-L-cysteine + N(6)-ubiquitinyl-[acceptor protein]-L-lysine.. It functions in the pathway protein modification; protein ubiquitination. With respect to regulation, E3 ligase activity is robustly activated by 5-hydroxymethylcytosine. In terms of biological role, E3 ubiquitin ligase that plays important roles in DNA methylation, histone modifications, cell cycle and DNA repair. Acts as a specific reader for 5-hydroxymethylcytosine (5hmC) and thereby recruits various substrates to these sites to ubiquitinate them. This activity also allows the maintenance of 5mC levels at specific genomic loci and regulates neuron-related gene expression. Participates in cell cycle regulation by ubiquitinating cyclins CCND1 and CCNE1 and thereby inducing G1 arrest. Also ubiquitinates PCNP leading to its degradation by the proteasome. Plays an active role in DNA damage repair by ubiquitinating p21/CDKN1A leading to its proteasomal degradation. Also promotes DNA repair by acting as an interstrand cross-links (ICLs) sensor. Mechanistically, cooperates with UHRF1 to ensure recruitment of FANCD2 to ICLs, leading to FANCD2 monoubiquitination and subsequent activation. Contributes to UV-induced DNA damage response by physically interacting with ATR in response to irradiation, thereby promoting ATR activation. This Homo sapiens (Human) protein is E3 ubiquitin-protein ligase UHRF2 (UHRF2).